Reading from the N-terminus, the 167-residue chain is Type IV major pilin protein PilE (167 aa).

Positions 1 to 7 are cleaved as a propeptide — leader sequence; it reads MNTLQKG. An N-methylphenylalanine modification is found at Phe-8. The chain crosses the membrane as a helical span at residues 8–28; the sequence is FTLIELMIVIAIVGILAAVAL. Ser-70 carries O-linked (GlcNAc...) serine glycosylation. The cysteines at positions 127 and 160 are disulfide-linked.

This sequence belongs to the N-Me-Phe pilin family. In terms of assembly, the pili are polar flexible filaments of about 5.4 nanometers diameter and 2.5 micrometers average length; they consist of only a single polypeptide chain arranged in a helical configuration of five subunits per turn in the assembled pilus.

The protein resides in the fimbrium. Its subcellular location is the membrane. Its function is as follows. Major component of the type IV pilus (T4P) that plays a role in cellular adherence, microcolony formation, resistance to neutrophil mediated killing, twitching motility as well as transformation. Mediates the attachment and the formation of bacterial microcolonies on host epithelial cells. Mechanistically, pili retractation induces host NF-kappa-B activation in infected cells, which is temporally associated with the formation of gonococcal microcolonies. The protein is Type IV major pilin protein PilE (pilE) of Neisseria gonorrhoeae.